The following is a 523-amino-acid chain: Non-specific phospholipase C3 (523 aa).

The interval 44-64 (DGVSESEPRSNPLSTSDPNSA) is disordered. Residues 52–64 (RSNPLSTSDPNSA) are compositionally biased toward polar residues.

Belongs to the bacterial phospholipase C family. Expressed in root tips, cotyledons, on leaf margins, stems, young anthers and funiculus.

It catalyses the reaction a 1-acyl-sn-glycero-3-phosphate + H2O = a 1-acyl-sn-glycerol + phosphate. Possesses specific phosphatase activity toward lysophosphatidic acid (LPA) in vitro. Does not show phospholipase C activity. May play a role in signal transduction and storage lipid synthesis. May be involved in brassinolide-mediated signaling in root development. The sequence is that of Non-specific phospholipase C3 (NPC3) from Arabidopsis thaliana (Mouse-ear cress).